A 438-amino-acid chain; its full sequence is Serine hydroxymethyltransferase (438 aa).

Residues Leu133 and 137–139 each bind (6S)-5,6,7,8-tetrahydrofolate; that span reads GHL. An N6-(pyridoxal phosphate)lysine modification is found at Lys242.

The protein belongs to the SHMT family. Homodimer. It depends on pyridoxal 5'-phosphate as a cofactor.

Its subcellular location is the cytoplasm. It carries out the reaction (6R)-5,10-methylene-5,6,7,8-tetrahydrofolate + glycine + H2O = (6S)-5,6,7,8-tetrahydrofolate + L-serine. It participates in one-carbon metabolism; tetrahydrofolate interconversion. Its pathway is amino-acid biosynthesis; glycine biosynthesis; glycine from L-serine: step 1/1. Functionally, catalyzes the reversible interconversion of serine and glycine with tetrahydrofolate (THF) serving as the one-carbon carrier. This reaction serves as the major source of one-carbon groups required for the biosynthesis of purines, thymidylate, methionine, and other important biomolecules. Also exhibits THF-independent aldolase activity toward beta-hydroxyamino acids, producing glycine and aldehydes, via a retro-aldol mechanism. The sequence is that of Serine hydroxymethyltransferase from Brucella suis (strain ATCC 23445 / NCTC 10510).